Here is a 217-residue protein sequence, read N- to C-terminus: Protein matrimony (217 aa).

The POLO box domain (PBD)-binding motif lies at 39 to 41 (STP). 2 positions are modified to phosphoserine: serine 63 and serine 66. Positions 83–106 (KQQQQQQHQHCHRTQLKPPPFVLP) are disordered. In terms of domain architecture, SAM spans 157 to 217 (NHAANVEQIL…NRIMDVLHTL (61 aa)).

Interacts with polo. Interacts with cort. Post-translationally, probably ubiquitinated: degraded during the oocyte-to-embryo transition by the anaphase promoting complex/cyclosome (APC/C) containing cort protein.

Its subcellular location is the nucleus. It is found in the chromosome. Its function is as follows. Polo kinase inhibitor required to maintain G2 arrest in the meiotic cell cycle in females. Holds heterochromatically paired homologs together from the end of pachytene until metaphase I. Haploinsufficient locus for homologous achiasmate segregation and may be required for the maintenance of heterochromatic pairings. The polypeptide is Protein matrimony (Drosophila melanogaster (Fruit fly)).